The following is a 390-amino-acid chain: NADH-quinone oxidoreductase subunit D (390 aa).

It belongs to the complex I 49 kDa subunit family. NDH-1 is composed of 14 different subunits. Subunits NuoB, C, D, E, F, and G constitute the peripheral sector of the complex.

The protein localises to the cell membrane. The catalysed reaction is a quinone + NADH + 5 H(+)(in) = a quinol + NAD(+) + 4 H(+)(out). Functionally, NDH-1 shuttles electrons from NADH, via FMN and iron-sulfur (Fe-S) centers, to quinones in the respiratory chain. The immediate electron acceptor for the enzyme in this species is believed to be ubiquinone. Couples the redox reaction to proton translocation (for every two electrons transferred, four hydrogen ions are translocated across the cytoplasmic membrane), and thus conserves the redox energy in a proton gradient. The chain is NADH-quinone oxidoreductase subunit D from Wolbachia pipientis subsp. Culex pipiens (strain wPip).